The following is a 305-amino-acid chain: tRNA dimethylallyltransferase (305 aa).

Residue 15–22 coordinates ATP; it reads GPTASGKS. 17 to 22 contacts substrate; it reads TASGKS. 2 interaction with substrate tRNA regions span residues 40 to 43 and 164 to 168; these read DSMQ and QRIVR.

Belongs to the IPP transferase family. Monomer. The cofactor is Mg(2+).

It catalyses the reaction adenosine(37) in tRNA + dimethylallyl diphosphate = N(6)-dimethylallyladenosine(37) in tRNA + diphosphate. Its function is as follows. Catalyzes the transfer of a dimethylallyl group onto the adenine at position 37 in tRNAs that read codons beginning with uridine, leading to the formation of N6-(dimethylallyl)adenosine (i(6)A). This is tRNA dimethylallyltransferase from Sinorhizobium medicae (strain WSM419) (Ensifer medicae).